Consider the following 310-residue polypeptide: Transcription initiation factor IIB (310 aa).

The TFIIB-type zinc-finger motif lies at 9-41 (EKETKCPECGSDDLRGDYERAEIVCGKCGLVID). Cysteine 14, cysteine 17, cysteine 33, and cysteine 36 together coordinate Zn(2+). A run of 2 repeats spans residues 127–210 (SELD…TREL) and 221–302 (DYVP…ELTE).

Belongs to the TFIIB family.

Functionally, stabilizes TBP binding to an archaeal box-A promoter. Also responsible for recruiting RNA polymerase II to the pre-initiation complex (DNA-TBP-TFIIB). The sequence is that of Transcription initiation factor IIB from Methanothermobacter thermautotrophicus (strain ATCC 29096 / DSM 1053 / JCM 10044 / NBRC 100330 / Delta H) (Methanobacterium thermoautotrophicum).